The chain runs to 592 residues: Probable translation initiation factor IF-2 (592 aa).

The tr-type G domain maps to 5–226; the sequence is IRSPFVVVMG…AGVSQRFIPR (222 aa). The tract at residues 14-21 is G1; that stretch reads GHVDVGKT. 14–21 is a GTP binding site; that stretch reads GHVDVGKT. The segment at 39 to 43 is G2; it reads MITQH. The segment at 80–83 is G3; it reads DTPG. GTP contacts are provided by residues 80 to 84 and 134 to 137; these read DTPGH and NKLD. The G4 stretch occupies residues 134–137; the sequence is NKLD. The interval 202 to 204 is G5; it reads SAV.

It belongs to the TRAFAC class translation factor GTPase superfamily. Classic translation factor GTPase family. IF-2 subfamily.

Functionally, function in general translation initiation by promoting the binding of the formylmethionine-tRNA to ribosomes. Seems to function along with eIF-2. This Pyrobaculum calidifontis (strain DSM 21063 / JCM 11548 / VA1) protein is Probable translation initiation factor IF-2.